The chain runs to 353 residues: Protein pelota homolog (353 aa).

It belongs to the eukaryotic release factor 1 family. Pelota subfamily. Monomer. The cofactor is a divalent metal cation.

Its subcellular location is the cytoplasm. In terms of biological role, may function in recognizing stalled ribosomes, interact with stem-loop structures in stalled mRNA molecules, and effect endonucleolytic cleavage of the mRNA. May play a role in the release non-functional ribosomes and degradation of damaged mRNAs. Has endoribonuclease activity. The sequence is that of Protein pelota homolog from Methanothermobacter thermautotrophicus (strain ATCC 29096 / DSM 1053 / JCM 10044 / NBRC 100330 / Delta H) (Methanobacterium thermoautotrophicum).